The sequence spans 269 residues: Phosphate import ATP-binding protein PstB 2 (269 aa).

An ABC transporter domain is found at 23 to 264 (LEVKDLSIYY…PKKQKTEDYI (242 aa)). ATP is bound at residue 55–62 (GPSGCGKS).

It belongs to the ABC transporter superfamily. Phosphate importer (TC 3.A.1.7) family. The complex is composed of two ATP-binding proteins (PstB), two transmembrane proteins (PstC and PstA) and a solute-binding protein (PstS).

The protein localises to the cell membrane. The catalysed reaction is phosphate(out) + ATP + H2O = ADP + 2 phosphate(in) + H(+). Part of the ABC transporter complex PstSACB involved in phosphate import. Responsible for energy coupling to the transport system. The chain is Phosphate import ATP-binding protein PstB 2 from Bacillus subtilis (strain 168).